Consider the following 142-residue polypeptide: Large ribosomal subunit protein uL13 (142 aa).

The protein belongs to the universal ribosomal protein uL13 family. In terms of assembly, part of the 50S ribosomal subunit.

Functionally, this protein is one of the early assembly proteins of the 50S ribosomal subunit, although it is not seen to bind rRNA by itself. It is important during the early stages of 50S assembly. The chain is Large ribosomal subunit protein uL13 from Leptothrix cholodnii (strain ATCC 51168 / LMG 8142 / SP-6) (Leptothrix discophora (strain SP-6)).